Reading from the N-terminus, the 208-residue chain is Ribosome maturation factor RimP (208 aa).

A disordered region spans residues 175-208; sequence GEDVEDLVADPGADDELDELDELDELDDGDEDEQ. The segment covering 177 to 208 has biased composition (acidic residues); it reads DVEDLVADPGADDELDELDELDELDDGDEDEQ.

This sequence belongs to the RimP family.

The protein resides in the cytoplasm. Required for maturation of 30S ribosomal subunits. The chain is Ribosome maturation factor RimP from Kineococcus radiotolerans (strain ATCC BAA-149 / DSM 14245 / SRS30216).